Consider the following 151-residue polypeptide: tRNA-specific adenosine deaminase (151 aa).

The region spanning 4–122 (NRDSYWMKIA…PFLKKIFINL (119 aa)) is the CMP/dCMP-type deaminase domain. H55 contributes to the Zn(2+) binding site. Residue E57 is the Proton donor of the active site. Zn(2+) contacts are provided by C85 and C88.

The protein belongs to the cytidine and deoxycytidylate deaminase family. As to quaternary structure, homodimer. Requires Zn(2+) as cofactor.

It catalyses the reaction adenosine(34) in tRNA + H2O + H(+) = inosine(34) in tRNA + NH4(+). Functionally, catalyzes the deamination of adenosine to inosine at the wobble position 34 of tRNA(Arg2). The sequence is that of tRNA-specific adenosine deaminase from Buchnera aphidicola subsp. Schizaphis graminum (strain Sg).